The chain runs to 261 residues: Phosphatidylglycerol--prolipoprotein diacylglyceryl transferase (261 aa).

The next 4 helical transmembrane spans lie at 17 to 37 (FGIH…LWLG), 60 to 80 (ALFY…ALFY), 92 to 112 (ILFL…VMVA), and 121 to 141 (GLTF…GLGA). Position 143 (arginine 143) interacts with a 1,2-diacyl-sn-glycero-3-phospho-(1'-sn-glycerol). Transmembrane regions (helical) follow at residues 175-195 (PSQL…LWWY), 203-223 (GSVS…VEFT), and 237-257 (LSMG…LLIV).

The protein belongs to the Lgt family.

The protein resides in the cell inner membrane. The catalysed reaction is L-cysteinyl-[prolipoprotein] + a 1,2-diacyl-sn-glycero-3-phospho-(1'-sn-glycerol) = an S-1,2-diacyl-sn-glyceryl-L-cysteinyl-[prolipoprotein] + sn-glycerol 1-phosphate + H(+). Its pathway is protein modification; lipoprotein biosynthesis (diacylglyceryl transfer). Catalyzes the transfer of the diacylglyceryl group from phosphatidylglycerol to the sulfhydryl group of the N-terminal cysteine of a prolipoprotein, the first step in the formation of mature lipoproteins. This is Phosphatidylglycerol--prolipoprotein diacylglyceryl transferase from Methylobacillus flagellatus (strain ATCC 51484 / DSM 6875 / VKM B-1610 / KT).